Consider the following 97-residue polypeptide: Large ribosomal subunit protein bL31 (97 aa).

Positions 75–97 (NKTKKSNQAKVEKQTRHRSINEL) are disordered. Residues 84–97 (KVEKQTRHRSINEL) show a composition bias toward basic and acidic residues.

It belongs to the bacterial ribosomal protein bL31 family. Type A subfamily. As to quaternary structure, part of the 50S ribosomal subunit.

Its function is as follows. Binds the 23S rRNA. The protein is Large ribosomal subunit protein bL31 of Mycoplasma genitalium (strain ATCC 33530 / DSM 19775 / NCTC 10195 / G37) (Mycoplasmoides genitalium).